A 308-amino-acid chain; its full sequence is Ribonuclease Z (308 aa).

Zn(2+) contacts are provided by histidine 61, histidine 63, aspartate 65, histidine 66, histidine 139, aspartate 210, and histidine 268. Aspartate 65 serves as the catalytic Proton acceptor.

Belongs to the RNase Z family. As to quaternary structure, homodimer. The cofactor is Zn(2+).

The enzyme catalyses Endonucleolytic cleavage of RNA, removing extra 3' nucleotides from tRNA precursor, generating 3' termini of tRNAs. A 3'-hydroxy group is left at the tRNA terminus and a 5'-phosphoryl group is left at the trailer molecule.. Zinc phosphodiesterase, which displays some tRNA 3'-processing endonuclease activity. Probably involved in tRNA maturation, by removing a 3'-trailer from precursor tRNA. The protein is Ribonuclease Z of Halobacterium salinarum (strain ATCC 700922 / JCM 11081 / NRC-1) (Halobacterium halobium).